Reading from the N-terminus, the 385-residue chain is A-type ATP synthase subunit C (385 aa).

This sequence belongs to the V-ATPase V0D/AC39 subunit family. Has multiple subunits with at least A(3), B(3), C, D, E, F, H, I and proteolipid K(x).

It is found in the cell membrane. Component of the A-type ATP synthase that produces ATP from ADP in the presence of a proton gradient across the membrane. This is A-type ATP synthase subunit C from Methanosphaera stadtmanae (strain ATCC 43021 / DSM 3091 / JCM 11832 / MCB-3).